The chain runs to 526 residues: Non-reducing end alpha-L-arabinofuranosidase BoGH43A (526 aa).

The signal sequence occupies residues 1–20; that stretch reads MRNALFLIFISLCSVCKSSA. The Proton acceptor role is filled by Asp34. Glu189 acts as the Proton donor in catalysis.

This sequence belongs to the glycosyl hydrolase 43 family.

Its subcellular location is the periplasm. The enzyme catalyses Hydrolysis of terminal non-reducing alpha-L-arabinofuranoside residues in alpha-L-arabinosides.. The protein operates within glucan metabolism; xyloglucan degradation. In terms of biological role, alpha-L-arabinofuranosidase involved in xyloglucan degradation by mediating the cleavage of terminal non-reducing alpha-L-arabinofuranoside residues in xyloglucan branches, converting the 'S' units to 'X' units. This is Non-reducing end alpha-L-arabinofuranosidase BoGH43A from Bacteroides ovatus (strain ATCC 8483 / DSM 1896 / JCM 5824 / BCRC 10623 / CCUG 4943 / NCTC 11153).